A 626-amino-acid chain; its full sequence is Basic helix-loop-helix ARNT-like protein 1 (626 aa).

The segment at methionine 1 to arginine 60 is disordered. Serine 17 is modified (phosphoserine; by GSK3-beta). Phosphothreonine; by GSK3-beta is present on threonine 21. Residues asparagine 36–glycine 41 carry the Nuclear localization signal motif. A compositionally biased stretch (basic and acidic residues) spans aspartate 51–arginine 60. The 54-residue stretch at asparagine 72–leucine 125 folds into the bHLH domain. A Phosphoserine modification is found at serine 78. At serine 90 the chain carries Phosphoserine; by CK2. The short motif at leucine 142 to leucine 152 is the Nuclear export signal 1 element. The PAS 1 domain occupies serine 143 to proline 215. Residue lysine 252 forms a Glycyl lysine isopeptide (Lys-Gly) (interchain with G-Cter in SUMO2 and SUMO3) linkage. Lysine 259 participates in a covalent cross-link: Glycyl lysine isopeptide (Lys-Gly) (interchain with G-Cter in SUMO); alternate. A Glycyl lysine isopeptide (Lys-Gly) (interchain with G-Cter in SUMO2); alternate cross-link involves residue lysine 259. A PAS 2 domain is found at proline 326–arginine 396. Residues leucine 361–leucine 369 carry the Nuclear export signal 2 motif. Residues threonine 401–asparagine 444 form the PAC domain. 2 disordered regions span residues threonine 457–glycine 493 and arginine 510–glutamate 597. Positions isoleucine 484–glycine 493 are enriched in gly residues. Residues arginine 508–glutamine 588 form an interaction with CIART region. Over residues glycine 511–proline 521 the composition is skewed to low complexity. Position 538 is an N6-acetyllysine (lysine 538).

In terms of assembly, component of the circadian clock oscillator which includes the CRY1/2 proteins, CLOCK or NPAS2, BMAL1 or BMAL2, CSNK1D and/or CSNK1E, TIMELESS and the PER1/2/3 proteins. Forms a heterodimer with CLOCK. The CLOCK-BMAL1 heterodimer is required for E-box-dependent transactivation, for CLOCK nuclear translocation and degradation, and, for phosphorylation of both CLOCK and BMAL1. Part of a nuclear complex which also includes RACK1 and PRKCA; RACK1 and PRKCA are recruited to the complex in a circadian manner. Interacts with NPAS2. Interacts with EZH2. Interacts with SUMO3. Interacts with SIRT1. Interacts with AHR. Interacts with ID1, ID2 and ID3. Interacts with DDX4. Interacts with OGT. Interacts with EED and SUZ12. Interacts with MTA1. Interacts with CIART. Interacts with HSP90. Interacts with KAT2B and EP300. Interacts with BHLHE40/DEC1 and BHLHE41/DEC2. Interacts with RELB and the interaction is enhanced in the presence of CLOCK. Interacts with PER1, PER2, CRY1 and CRY2 and this interaction requires a translocation to the nucleus. Interaction of the CLOCK-BMAL1 heterodimer with PER or CRY inhibits transcription activation. Interaction of the CLOCK-BMAL1 with CRY1 is independent of DNA but with PER2 is off DNA. The CLOCK-BMAL1 heterodimer interacts with GSK3B. Interacts with KDM5A. Interacts with KMT2A; in a circadian manner. Interacts with UBE3A. Interacts with PRKCG. Interacts with MAGEL2. Interacts with NCOA2. Interacts with THRAP3. The CLOCK-BMAL1 heterodimer interacts with PASD1. Interacts with PASD1. Interacts with USP9X. Interacts with PIWIL2 (via PIWI domain). Interacts with HDAC3. Interacts with HNF4A. In terms of processing, ubiquitinated, leading to its proteasomal degradation. Deubiquitinated by USP9X. Post-translationally, O-glycosylated; contains O-GlcNAc. O-glycosylation by OGT prevents protein degradation by inhibiting ubiquitination. It also stabilizes the CLOCK-BMAL1 heterodimer thereby increasing CLOCK-BMAL1-mediated transcription of genes in the negative loop of the circadian clock such as PER1/2/3 and CRY1/2. Acetylated on Lys-538 by CLOCK during the repression phase of the circadian cycle. Acetylation facilitates recruitment of CRY1 protein and initiates the repression phase of the circadian cycle. Acetylated at Lys-538 by KAT5 during the activation phase of the cycle, leading to recruitment of the positive transcription elongation factor b (P-TEFb) and BRD4, followed by productive elongation of circadian transcripts. Deacetylated by SIRT1, which may result in decreased protein stability. In terms of processing, phosphorylated upon dimerization with CLOCK. Phosphorylation enhances the transcriptional activity, alters the subcellular localization and decreases the stability of the CLOCK-BMAL1 heterodimer by promoting its degradation. Phosphorylation shows circadian variations in the liver with a peak between CT10 to CT14. Phosphorylation at Ser-90 by CK2 is essential for its nuclear localization, its interaction with CLOCK and controls CLOCK nuclear entry. Dephosphorylation at Ser-78 is important for dimerization with CLOCK and transcriptional activity. Post-translationally, sumoylated on Lys-259 upon dimerization with CLOCK. Predominantly conjugated to poly-SUMO2/3 rather than SUMO1 and the level of these conjugates undergo rhythmic variation, peaking at CT9-CT12. Sumoylation localizes it exclusively to the PML body and promotes its ubiquitination in the PML body, ubiquitin-dependent proteasomal degradation and the transcriptional activity of the CLOCK-BMAL1 heterodimer. Undergoes lysosome-mediated degradation in a time-dependent manner in the liver.

The protein resides in the nucleus. Its subcellular location is the cytoplasm. The protein localises to the PML body. Transcriptional activator which forms a core component of the circadian clock. The circadian clock, an internal time-keeping system, regulates various physiological processes through the generation of approximately 24 hour circadian rhythms in gene expression, which are translated into rhythms in metabolism and behavior. It is derived from the Latin roots 'circa' (about) and 'diem' (day) and acts as an important regulator of a wide array of physiological functions including metabolism, sleep, body temperature, blood pressure, endocrine, immune, cardiovascular, and renal function. Consists of two major components: the central clock, residing in the suprachiasmatic nucleus (SCN) of the brain, and the peripheral clocks that are present in nearly every tissue and organ system. Both the central and peripheral clocks can be reset by environmental cues, also known as Zeitgebers (German for 'timegivers'). The predominant Zeitgeber for the central clock is light, which is sensed by retina and signals directly to the SCN. The central clock entrains the peripheral clocks through neuronal and hormonal signals, body temperature and feeding-related cues, aligning all clocks with the external light/dark cycle. Circadian rhythms allow an organism to achieve temporal homeostasis with its environment at the molecular level by regulating gene expression to create a peak of protein expression once every 24 hours to control when a particular physiological process is most active with respect to the solar day. Transcription and translation of core clock components (CLOCK, NPAS2, BMAL1, BMAL2, PER1, PER2, PER3, CRY1 and CRY2) plays a critical role in rhythm generation, whereas delays imposed by post-translational modifications (PTMs) are important for determining the period (tau) of the rhythms (tau refers to the period of a rhythm and is the length, in time, of one complete cycle). A diurnal rhythm is synchronized with the day/night cycle, while the ultradian and infradian rhythms have a period shorter and longer than 24 hours, respectively. Disruptions in the circadian rhythms contribute to the pathology of cardiovascular diseases, cancer, metabolic syndromes and aging. A transcription/translation feedback loop (TTFL) forms the core of the molecular circadian clock mechanism. Transcription factors, CLOCK or NPAS2 and BMAL1 or BMAL2, form the positive limb of the feedback loop, act in the form of a heterodimer and activate the transcription of core clock genes and clock-controlled genes (involved in key metabolic processes), harboring E-box elements (5'-CACGTG-3') within their promoters. The core clock genes: PER1/2/3 and CRY1/2 which are transcriptional repressors form the negative limb of the feedback loop and interact with the CLOCK|NPAS2-BMAL1|BMAL2 heterodimer inhibiting its activity and thereby negatively regulating their own expression. This heterodimer also activates nuclear receptors NR1D1, NR1D2, RORA, RORB and RORG, which form a second feedback loop and which activate and repress BMAL1 transcription, respectively. BMAL1 positively regulates myogenesis and negatively regulates adipogenesis via the transcriptional control of the genes of the canonical Wnt signaling pathway. Plays a role in normal pancreatic beta-cell function; regulates glucose-stimulated insulin secretion via the regulation of antioxidant genes NFE2L2/NRF2 and its targets SESN2, PRDX3, CCLC and CCLM. Negatively regulates the mTORC1 signaling pathway; regulates the expression of MTOR and DEPTOR. Controls diurnal oscillations of Ly6C inflammatory monocytes; rhythmic recruitment of the PRC2 complex imparts diurnal variation to chemokine expression that is necessary to sustain Ly6C monocyte rhythms. Regulates the expression of HSD3B2, STAR, PTGS2, CYP11A1, CYP19A1 and LHCGR in the ovary and also the genes involved in hair growth. Plays an important role in adult hippocampal neurogenesis by regulating the timely entry of neural stem/progenitor cells (NSPCs) into the cell cycle and the number of cell divisions that take place prior to cell-cycle exit. Regulates the circadian expression of CIART. The CLOCK-BMAL1 heterodimer regulates the circadian expression of SERPINE1/PAI1, VWF, B3, CCRN4L/NOC, NAMPT, DBP, MYOD1, PPARGC1A, PPARGC1B, SIRT1, GYS2, F7, NGFR, GNRHR, BHLHE40/DEC1, ATF4, MTA1 and also genes implicated in glucose and lipid metabolism. Promotes rhythmic chromatin opening, regulating the DNA accessibility of other transcription factors. The NPAS2-BMAL1 heterodimer positively regulates the expression of MAOA, F7 and LDHA and modulates the circadian rhythm of daytime contrast sensitivity by regulating the rhythmic expression of adenylate cyclase type 1 (ADCY1) in the retina. The preferred binding motif for the CLOCK-BMAL1 heterodimer is 5'-CACGTGA-3', which contains a flanking adenine nucleotide at the 3-prime end of the canonical 6-nucleotide E-box sequence. CLOCK specifically binds to the half-site 5'-CAC-3', while BMAL1 binds to the half-site 5'-GTGA-3'. The CLOCK-BMAL1 heterodimer also recognizes the non-canonical E-box motifs 5'-AACGTGA-3' and 5'-CATGTGA-3'. Essential for the rhythmic interaction of CLOCK with ASS1 and plays a critical role in positively regulating CLOCK-mediated acetylation of ASS1. Plays a role in protecting against lethal sepsis by limiting the expression of immune checkpoint protein CD274 in macrophages in a PKM2-dependent manner. Regulates the diurnal rhythms of skeletal muscle metabolism via transcriptional activation of genes promoting triglyceride synthesis (DGAT2) and metabolic efficiency (COQ10B). This is Basic helix-loop-helix ARNT-like protein 1 (BMAL1) from Equus caballus (Horse).